Reading from the N-terminus, the 234-residue chain is Cyclin-J18 (234 aa).

Belongs to the cyclin family.

This chain is Cyclin-J18 (CYCJ18), found in Arabidopsis thaliana (Mouse-ear cress).